A 97-amino-acid chain; its full sequence is Citrate lyase acyl carrier protein (97 aa).

The residue at position 14 (Ser-14) is an O-(phosphoribosyl dephospho-coenzyme A)serine.

The protein belongs to the CitD family. In terms of assembly, oligomer with a subunit composition of (alpha,beta,gamma)6.

The protein resides in the cytoplasm. In terms of biological role, covalent carrier of the coenzyme of citrate lyase. This chain is Citrate lyase acyl carrier protein, found in Enterobacter sp. (strain 638).